We begin with the raw amino-acid sequence, 153 residues long: Aminoglycoside N(6')-acetyltransferase type 1 (153 aa).

An N-acetyltransferase domain is found at Pro6–Ala153. Positions 27, 70, 83, 119, and 140 each coordinate substrate.

In terms of assembly, homodimer.

It catalyses the reaction kanamycin B + acetyl-CoA = N(6')-acetylkanamycin B + CoA + H(+). Functionally, catalyzes the transfer of an acetyl group from acetyl-CoA to the 6'-amino group of aminoglycoside molecules conferring resistance to antibiotics containing the purpurosamine ring including amikacin, gentamicin, kanamycin B, tobramycin, netilmicin, and isepamicin. This is Aminoglycoside N(6')-acetyltransferase type 1 from Stenotrophomonas maltophilia (Pseudomonas maltophilia).